The chain runs to 696 residues: MAREYKIEDYRNFGIMAHIDAGKTTTTERVLYYTGKSHKIGEVHDGAATMDWMEQEQERGITITSAATTTFWKGRDGKMRRFNIIDTPGHVDFTIEVERSLRVLDGAIALLDANAGVEPQTETVWRQADKYRVPRMIFCNKMDKIGADFYRSVEMIGSRLGAQAVVMQLPIGAETEFKGVVDLVEMNALVWRDETLGAAWDVVEIPADLQARAQEYREKMIEAAVEMDETALENYLEGKMPSNDEIRSLIRKGTIAVKFFPMFCGSAFKNKGVQPLLDAVVEYLPSPADVPAIKGVDAKTDAEIERHAVDDEPLSMLAFKIMNDPFVGSLTFARIYSGKLTKGISVDNTVKGKKERIGRMLQMHANSRADVEEAFAGDIVALAGLKDTTTGDTLCDPLHPVILERMEFPDPVIQIAIEPKTKNDQEKMGLALHRLAAEDPSFRVKTDEESGQTIISGMGELHLDIIVDRMRREFKVEANVGAPQVAYRETITRKHEQDYTHKKQTGGTGQFARVKVLFEPNTESEEFVFESKIVGGAVPKEYIPGVEKGIQSVMGAGPFAGFPMIGVRATLIDGAYHDVDSSVLAFEIASRACFREAAPKLGVQLLEPIMKVEVVTPEDYVGSVIGDLNGRRGQIQGQEARGVAVVINAMVPLANMFKYVDNLRSMSQGRAAYTMQFDHYEPVPTAVAQEVQKKYA.

Residues 8–288 (EDYRNFGIMA…AVVEYLPSPA (281 aa)) enclose the tr-type G domain. GTP contacts are provided by residues 17–24 (AHIDAGKT), 86–90 (DTPGH), and 140–143 (NKMD).

The protein belongs to the TRAFAC class translation factor GTPase superfamily. Classic translation factor GTPase family. EF-G/EF-2 subfamily.

It is found in the cytoplasm. Catalyzes the GTP-dependent ribosomal translocation step during translation elongation. During this step, the ribosome changes from the pre-translocational (PRE) to the post-translocational (POST) state as the newly formed A-site-bound peptidyl-tRNA and P-site-bound deacylated tRNA move to the P and E sites, respectively. Catalyzes the coordinated movement of the two tRNA molecules, the mRNA and conformational changes in the ribosome. This Mesorhizobium japonicum (strain LMG 29417 / CECT 9101 / MAFF 303099) (Mesorhizobium loti (strain MAFF 303099)) protein is Elongation factor G.